The chain runs to 616 residues: General alpha-glucoside permease (616 aa).

Over Met-1–Thr-115 the chain is Cytoplasmic. The segment covering Ser-15 to Arg-27 has biased composition (basic and acidic residues). Residues Ser-15–Asp-40 form a disordered region. Residues Thr-116–Phe-136 traverse the membrane as a helical segment. The Extracellular segment spans residues Gln-137–Asn-160. The chain crosses the membrane as a helical span at residues Met-161 to Met-181. Topologically, residues Gly-182–Leu-191 are cytoplasmic. Residues Gly-192 to Val-212 traverse the membrane as a helical segment. The Extracellular portion of the chain corresponds to Gly-213–Gln-214. The chain crosses the membrane as a helical span at residues Ile-215 to Val-235. The Cytoplasmic portion of the chain corresponds to Cys-236–Tyr-242. The helical transmembrane segment at Tyr-243–Met-263 threads the bilayer. Residues Lys-264–Lys-278 are Extracellular-facing. A helical transmembrane segment spans residues Leu-279–Pro-299. Residues Glu-300–Cys-373 are Cytoplasmic-facing. A helical transmembrane segment spans residues Leu-374–Phe-394. Residues Glu-395 to Ala-404 lie on the Extracellular side of the membrane. The helical transmembrane segment at Phe-405–Ile-425 threads the bilayer. Residues Ser-426–Thr-433 lie on the Cytoplasmic side of the membrane. Residues Ile-434–Phe-454 form a helical membrane-spanning segment. Residues Gly-455–Gly-466 lie on the Extracellular side of the membrane. Residues Leu-467–Val-487 form a helical membrane-spanning segment. Over Ala-488–Arg-504 the chain is Cytoplasmic. The helical transmembrane segment at Ile-505 to Ser-525 threads the bilayer. At Asp-526–Lys-532 the chain is on the extracellular side. A helical membrane pass occupies residues Thr-533–Pro-553. Residues Glu-554 to Cys-616 are Cytoplasmic-facing. Positions Gly-587–Cys-616 are disordered. A compositionally biased stretch (basic and acidic residues) spans Lys-606 to Cys-616.

This sequence belongs to the major facilitator superfamily. Sugar transporter (TC 2.A.1.1) family.

The protein resides in the cell membrane. Its function is as follows. High-affinity uptake of alpha-glucosides such as maltose, turanose, isomaltose, alpha-methylglucoside, maltotriose, palatinose, trehalose, melezitose and glucose. Acts with the concomitant transport of protons into the cell (symport system). Provides an alternative and minor mechanism for growth on trehalose carbon source by transporting trehalose into the cytoplasm for conversion to glucose by neutral trehalase NTH1. This chain is General alpha-glucoside permease, found in Saccharomyces cerevisiae (strain CEN.PK113-7D) (Baker's yeast).